A 152-amino-acid chain; its full sequence is Protein SprT-like (152 aa).

A SprT-like domain is found at Gln-7–Pro-147. Zn(2+) is bound at residue His-67. Glu-68 is an active-site residue. Residue His-71 participates in Zn(2+) binding.

Belongs to the SprT family. Zn(2+) is required as a cofactor.

It is found in the cytoplasm. The polypeptide is Protein SprT-like (Bacillus cereus (strain G9842)).